Reading from the N-terminus, the 437-residue chain is Putative galacturan 1,4-alpha-galacturonidase A (437 aa).

Positions 1-20 are cleaved as a signal peptide; sequence MKLSGSSALLLLGFGLLGHA. N-linked (GlcNAc...) asparagine glycosylation is found at Asn30, Asn101, Asn110, Asn161, Asn196, and Asn203. One copy of the PbH1 1 repeat lies at 222–243; it reads SDHVTITNWVYEGGDDAVAFKP. Asp236 acts as the Proton donor in catalysis. N-linked (GlcNAc...) asparagine glycosylation is found at Asn244, Asn252, Asn278, Asn324, Asn352, Asn371, Asn382, and Asn387. 3 PbH1 repeats span residues 245 to 265, 276 to 302, and 322 to 343; these read STNIHVENVTVYGGPGIAFGS, VENITVKNANFQPSSQRAMNSGIYFKS, and VRNVTVEDITFKDVQLPIYIDT. The cysteines at positions 396 and 402 are disulfide-linked.

Belongs to the glycosyl hydrolase 28 family.

The protein localises to the secreted. It catalyses the reaction [(1-&gt;4)-alpha-D-galacturonosyl](n) + H2O = alpha-D-galacturonate + [(1-&gt;4)-alpha-D-galacturonosyl](n-1). Functionally, specific in hydrolyzing the terminal glycosidic bond of polygalacturonic acid and oligogalacturonates. This chain is Putative galacturan 1,4-alpha-galacturonidase A (rgxA), found in Aspergillus flavus (strain ATCC 200026 / FGSC A1120 / IAM 13836 / NRRL 3357 / JCM 12722 / SRRC 167).